Here is a 98-residue protein sequence, read N- to C-terminus: MPRSLKKGPFIDFKLEKRILDLNAKDEKKVVKTWSRSSMISPDFVGHTIAVHNGKTHVPVYVSDNMVGHKLGEFAPTRTFRGHAGGKAEKGGSAPRKK.

A disordered region spans residues 77–98 (TRTFRGHAGGKAEKGGSAPRKK).

Belongs to the universal ribosomal protein uS19 family.

Its function is as follows. Protein S19 forms a complex with S13 that binds strongly to the 16S ribosomal RNA. The sequence is that of Small ribosomal subunit protein uS19 from Chlorobium limicola (strain DSM 245 / NBRC 103803 / 6330).